Consider the following 298-residue polypeptide: UDP-N-acetylenolpyruvoylglucosamine reductase (298 aa).

Residues 26–191 (KTGGAADVFV…LDATFSLALE (166 aa)) form the FAD-binding PCMH-type domain. Residue Arg170 is part of the active site. Ser220 (proton donor) is an active-site residue. Glu290 is a catalytic residue.

This sequence belongs to the MurB family. Requires FAD as cofactor.

Its subcellular location is the cytoplasm. It catalyses the reaction UDP-N-acetyl-alpha-D-muramate + NADP(+) = UDP-N-acetyl-3-O-(1-carboxyvinyl)-alpha-D-glucosamine + NADPH + H(+). The protein operates within cell wall biogenesis; peptidoglycan biosynthesis. Its function is as follows. Cell wall formation. In Listeria monocytogenes serotype 4b (strain CLIP80459), this protein is UDP-N-acetylenolpyruvoylglucosamine reductase.